The sequence spans 561 residues: MPKASASSAKMTASTSNVSSSNSKLKKSKASSPSASPEVSTPSTSNSNDDQDGHVSEDMSDAEEGESQEHSASGSGISDHDDDDDPSADKDSPAADEEQDEKKVATIADDGKKVEFSDLGVIPQIVEACTNMGFKHPTPIQVKAIPEALQARDVIGLAQTGSGKTAAFTIPILQALWDNPKPFFACVLAPTRELAYQISQQVEALGSTIGVRSATIVGGMDMMSQSIALSKRPHVIVATPGRLQDHLENTKGFSLRGLQYLVMDEADRLLDMDFGPIIDKLLQSIPRERRTMLFSATMTTKVAKLQRASLKNPVRVEVDTKYTTVSTLKQHYMFMPFAHKDTYLVHLANEQAGHSIIVFTRTVHDSQRLSILLRLLGFPAIPLHGQLSQQARLGALNKFKTGGRSILVATDVASRGLDIPAVDLVVNYDIPTNSKDYIHRVGRTARAGRSGRSVTLVTQYDVELLQRIEAVIGLKMTEFPGGNDKEAVMLLSERVAEAHRAAVRELKDKGVGSAGGSGKRKRKMDGKYGDDMDRDDDQVQAGLPVSGNGRHQNQNRKKGRR.

Low complexity-rich tracts occupy residues 1-23 (MPKA…SSNS) and 30-45 (ASSP…PSTS). The interval 1-109 (MPKASASSAK…DEKKVATIAD (109 aa)) is disordered. Basic and acidic residues predominate over residues 100 to 109 (DEKKVATIAD). The Q motif motif lies at 114–142 (VEFSDLGVIPQIVEACTNMGFKHPTPIQV). Residues 145-316 (IPEALQARDV…RASLKNPVRV (172 aa)) form the Helicase ATP-binding domain. Residue 158-165 (AQTGSGKT) participates in ATP binding. Residues 264–267 (DEAD) carry the DEAD box motif. The region spanning 339–487 (HKDTYLVHLA…EFPGGNDKEA (149 aa)) is the Helicase C-terminal domain. The segment at 506–561 (LKDKGVGSAGGSGKRKRKMDGKYGDDMDRDDDQVQAGLPVSGNGRHQNQNRKKGRR) is disordered.

Belongs to the DEAD box helicase family. DDX47/RRP3 subfamily. Interacts with the SSU processome.

It is found in the nucleus. The catalysed reaction is ATP + H2O = ADP + phosphate + H(+). Its function is as follows. ATP-dependent rRNA helicase required for pre-ribosomal RNA processing. Involved in the maturation of the 35S-pre-rRNA and to its cleavage to mature 18S rRNA. The polypeptide is ATP-dependent rRNA helicase RRP3 (Mycosarcoma maydis (Corn smut fungus)).